The following is a 530-amino-acid chain: Autoinducer-2 kinase (530 aa).

It belongs to the FGGY kinase family.

The protein resides in the cytoplasm. The catalysed reaction is (S)-4,5-dihydroxypentane-2,3-dione + ATP = (2S)-2-hydroxy-3,4-dioxopentyl phosphate + ADP + H(+). Functionally, catalyzes the phosphorylation of autoinducer-2 (AI-2) to phospho-AI-2, which subsequently inactivates the transcriptional regulator LsrR and leads to the transcription of the lsr operon. Phosphorylates the ring-open form of (S)-4,5-dihydroxypentane-2,3-dione (DPD), which is the precursor to all AI-2 signaling molecules, at the C5 position. The chain is Autoinducer-2 kinase from Salmonella paratyphi B (strain ATCC BAA-1250 / SPB7).